The sequence spans 330 residues: Ferrochelatase (330 aa).

2 residues coordinate Fe cation: H200 and E281.

This sequence belongs to the ferrochelatase family.

It localises to the cytoplasm. The catalysed reaction is heme b + 2 H(+) = protoporphyrin IX + Fe(2+). It functions in the pathway porphyrin-containing compound metabolism; protoheme biosynthesis; protoheme from protoporphyrin-IX: step 1/1. Its function is as follows. Catalyzes the ferrous insertion into protoporphyrin IX. The sequence is that of Ferrochelatase from Marinomonas sp. (strain MWYL1).